We begin with the raw amino-acid sequence, 195 residues long: Interferon tau (195 aa).

Residues M1–G23 form the signal peptide. Disulfide bonds link C52–C162 and C87–C109.

Belongs to the alpha/beta interferon family. IFN-alphaII subfamily.

The protein resides in the secreted. Functionally, paracrine hormone primarily responsible for maternal recognition of pregnancy. Interacts with endometrial receptors, probably type I interferon receptors, and blocks estrogen receptor expression, preventing the estrogen-induced increase in oxytocin receptor expression in the endometrium. This results in the suppression of the pulsatile endometrial release of the luteolytic hormone prostaglandin F2-alpha, hindering the regression of the corpus luteum (luteolysis) and therefore a return to ovarian cyclicity. This, and a possible direct effect of IFN-tau on prostaglandin synthesis, leads in turn to continued ovarian progesterone secretion, which stimulates the secretion by the endometrium of the nutrients required for the growth of the conceptus. In summary, displays particularly high antiviral and antiproliferative potency concurrently with particular weak cytotoxicity, high antiluteolytic activity and immunomodulatory properties. In contrast with other IFNs, IFN-tau is not virally inducible. This chain is Interferon tau (IFNT), found in Giraffa camelopardalis (Giraffe).